Here is a 287-residue protein sequence, read N- to C-terminus: MIPPRFEYHAPKSVGEAVALLGQLGSDAKLLAGGHSLLPMMKLRFAQPEHLIDINRIPELRGIREEGSTVVIGAMTVENDLISSPIVQARLPLLAEAAKLIADPQVRNRGTIGGDIAHGHPGNDHPALSIAVEAHFVLEGPNGRRTVPADGFFLGTYMTLLEENEVMVEIRVPAFAQGTGWAYEKLKRKTGDWATAGCAVVMRKSGNTVSHIRIALTNVAPTALRREGGRSRLLGKAFTKEAVQAAADAAIAICEPAEDLRGDADYKTAMAGQMVKRALNAAWARCA.

Residues 1-177 (MIPPRFEYHA…VEIRVPAFAQ (177 aa)) form the FAD-binding PCMH-type domain. Residues 32 to 36 (AGGHS) and 111 to 115 (TIGGD) contribute to the FAD site.

As to quaternary structure, dimer of heterotrimers. Each heterotrimer consists of a large, a medium and a small subunit. Requires FAD as cofactor.

The enzyme catalyses CO + a quinone + H2O = a quinol + CO2. In terms of biological role, catalyzes the oxidation of carbon monoxide to carbon dioxide. The sequence is that of Carbon monoxide dehydrogenase medium chain (cutM) from Hydrogenophaga pseudoflava (Pseudomonas carboxydoflava).